A 431-amino-acid chain; its full sequence is Tol-Pal system protein TolB (431 aa).

The N-terminal stretch at methionine 1–alanine 26 is a signal peptide. A disordered region spans residues proline 411–glutamine 431.

It belongs to the TolB family. In terms of assembly, the Tol-Pal system is composed of five core proteins: the inner membrane proteins TolA, TolQ and TolR, the periplasmic protein TolB and the outer membrane protein Pal. They form a network linking the inner and outer membranes and the peptidoglycan layer.

It is found in the periplasm. Part of the Tol-Pal system, which plays a role in outer membrane invagination during cell division and is important for maintaining outer membrane integrity. This is Tol-Pal system protein TolB from Burkholderia vietnamiensis (strain G4 / LMG 22486) (Burkholderia cepacia (strain R1808)).